The sequence spans 216 residues: Phosphoenolpyruvate guanylyltransferase (216 aa).

Residues Thr150, Gly165, and Ser168 each contribute to the phosphoenolpyruvate site.

Belongs to the CofC family.

It catalyses the reaction phosphoenolpyruvate + GTP + H(+) = enolpyruvoyl-2-diphospho-5'-guanosine + diphosphate. Its pathway is cofactor biosynthesis; coenzyme F420 biosynthesis. Guanylyltransferase that catalyzes the activation of phosphoenolpyruvate (PEP) as enolpyruvoyl-2-diphospho-5'-guanosine, via the condensation of PEP with GTP. It is involved in the biosynthesis of coenzyme F420, a hydride carrier cofactor. This chain is Phosphoenolpyruvate guanylyltransferase, found in Mycobacterium leprae (strain Br4923).